The chain runs to 649 residues: Lipolysis-stimulated lipoprotein receptor (649 aa).

The segment covering 1-16 (MQQDGLGVGTRNGSGK) has biased composition (gly residues). Positions 1–21 (MQQDGLGVGTRNGSGKGRSVH) are disordered. Residues 1–259 (MQQDGLGVGT…PGFQAGPIED (259 aa)) lie on the Extracellular side of the membrane. The Ig-like V-type domain maps to 86-234 (PARAIQVTVS…DLQGNNEAYA (149 aa)). Cys111 and Cys218 are disulfide-bonded. Residues 260–280 (WLFVVVVCLAAFLIFLLLGIC) form a helical membrane-spanning segment. Topologically, residues 281–649 (WCQCCPHTCC…LALSRESLVV (369 aa)) are cytoplasmic. At Thr336 the chain carries Phosphothreonine. Ser365, Ser371, Ser389, Ser432, and Ser436 each carry phosphoserine. The segment at 414-649 (NFDPSRPGPP…LALSRESLVV (236 aa)) is disordered. Basic and acidic residues predominate over residues 426–444 (RVERAMSEVTSLHEDDWRS). The residue at position 453 (Thr453) is a Phosphothreonine. A phosphoserine mark is found at Ser464, Ser467, and Ser493. The residue at position 501 (Thr501) is a Phosphothreonine. The span at 502-518 (PPSTAESGSRSPTSNGG) shows a compositional bias: polar residues. A phosphoserine mark is found at Ser528 and Ser530. Over residues 529-565 (RSRDDLYDQDDSRDFPRSRDPHYDDFRSRERPPADPR) the composition is skewed to basic and acidic residues. Position 535 is a phosphotyrosine (Tyr535). Phosphoserine is present on residues Ser540 and Ser579. The span at 589-609 (RLLEEAVRKKGSEERRRPHKE) shows a compositional bias: basic and acidic residues. Ser631 is modified (phosphoserine). Lys638 is covalently cross-linked (Glycyl lysine isopeptide (Lys-Gly) (interchain with G-Cter in ubiquitin)). Phosphoserine is present on residues Ser643 and Ser646.

It belongs to the immunoglobulin superfamily. LISCH7 family. Homotrimer or homotetramer. Assembles into cell-cell contacts. Interacts (via the cytoplasmic domain) with MARVELD2 (via C-terminal cytoplasmic domain); the interaction is required to recruit MARVELD2 to tricellular contacts. Interacts with OCLN. In terms of processing, phosphorylation at Ser-365 by MAPK8/JNK1 and MAPK9/JNK2 may be required for exclusive localization at tricellular tight junstions. Post-translationally, polyubiquitinated at Lys-638 via 'Lys-63'-linked ubiquitin chains; deubiquitinated by USP53.

Its subcellular location is the cell membrane. It localises to the cell junction. It is found in the tight junction. In terms of biological role, probable role in the clearance of triglyceride-rich lipoprotein from blood. Binds chylomicrons, LDL and VLDL in presence of free fatty acids and allows their subsequent uptake in the cells. Maintains epithelial barrier function by recruiting MARVELD2/tricellulin to tricellular tight junctions. The polypeptide is Lipolysis-stimulated lipoprotein receptor (Homo sapiens (Human)).